A 94-amino-acid polypeptide reads, in one-letter code: Alpha-conotoxin-like Cp20.2 (94 aa).

An N-terminal signal peptide occupies residues 1-24 (MPKLAVVLLVLLILPLSYFDAAGG). The propeptide occupies 25–45 (QAVQWDRRGNGLARYLQRGDR). 4 disulfides stabilise this stretch: C63–C72, C68–C80, C73–C90, and C78–C92.

It belongs to the conotoxin D superfamily. Hetero-, homo- or pseudo-homodimer (identical sequence, different post-translational modifications). Expressed by the venom duct.

The protein localises to the secreted. In terms of biological role, alpha-conotoxins act on postsynaptic membranes, they bind to the nicotinic acetylcholine receptors (nAChR) and thus inhibit them. Through its two C-terminal domains, this homodimeric protein would bind to two nAChR allosteric sites, located outside the nAChR C-loop of the principal binding face and at the adjacent binding interface in a clockwise direction. This toxin specifically blocks mammalian neuronal nAChR of the alpha-7/CHRNA7, alpha-3-beta-2/CHRNA3-CHRNB2 and alpha-4-beta-2/CHRNA4-CHRNB2 subtypes. This Conus capitaneus (Captain cone) protein is Alpha-conotoxin-like Cp20.2.